Here is a 636-residue protein sequence, read N- to C-terminus: Chaperone protein DnaK (636 aa).

Thr-203 is subject to Phosphothreonine; by autocatalysis. The interval 602–636 (VYGKQQEGAPAQEEPSAEGKKADDEGTVEGEFREV) is disordered. Residues 618–636 (AEGKKADDEGTVEGEFREV) are compositionally biased toward basic and acidic residues.

Belongs to the heat shock protein 70 family.

Its function is as follows. Acts as a chaperone. The chain is Chaperone protein DnaK from Dehalococcoides mccartyi (strain ATCC BAA-2100 / JCM 16839 / KCTC 5957 / BAV1).